The chain runs to 270 residues: D-aminoacyl-tRNA deacylase (270 aa).

The protein belongs to the DtdA deacylase family. Monomer. The cofactor is Zn(2+).

The catalysed reaction is a D-aminoacyl-tRNA + H2O = a tRNA + a D-alpha-amino acid + H(+). It catalyses the reaction glycyl-tRNA(Ala) + H2O = tRNA(Ala) + glycine + H(+). Its function is as follows. D-aminoacyl-tRNA deacylase with broad substrate specificity. By recycling D-aminoacyl-tRNA to D-amino acids and free tRNA molecules, this enzyme counteracts the toxicity associated with the formation of D-aminoacyl-tRNA entities in vivo. This Pyrococcus furiosus (strain ATCC 43587 / DSM 3638 / JCM 8422 / Vc1) protein is D-aminoacyl-tRNA deacylase.